The primary structure comprises 90 residues: UPF0213 protein lmo0166 (90 aa).

The GIY-YIG domain occupies 5-80 (SEHFFYVLKC…KKLSRKNKDA (76 aa)).

It belongs to the UPF0213 family.

The protein is UPF0213 protein lmo0166 of Listeria monocytogenes serovar 1/2a (strain ATCC BAA-679 / EGD-e).